The following is a 600-amino-acid chain: NADH-quinone oxidoreductase subunit C/D (600 aa).

Residues 1–190 (MIDLMPKKNT…EPFFLNEQKE (190 aa)) are NADH dehydrogenase I subunit C. An NADH dehydrogenase I subunit D region spans residues 214-600 (EFMFLNLGPN…IDFVMSDVDR (387 aa)).

In the N-terminal section; belongs to the complex I 30 kDa subunit family. The protein in the C-terminal section; belongs to the complex I 49 kDa subunit family. As to quaternary structure, NDH-1 is composed of 13 different subunits. Subunits NuoB, CD, E, F, and G constitute the peripheral sector of the complex.

Its subcellular location is the cell inner membrane. The enzyme catalyses a quinone + NADH + 5 H(+)(in) = a quinol + NAD(+) + 4 H(+)(out). Its function is as follows. NDH-1 shuttles electrons from NADH, via FMN and iron-sulfur (Fe-S) centers, to quinones in the respiratory chain. The immediate electron acceptor for the enzyme in this species is believed to be ubiquinone. Couples the redox reaction to proton translocation (for every two electrons transferred, four hydrogen ions are translocated across the cytoplasmic membrane), and thus conserves the redox energy in a proton gradient. In Buchnera aphidicola subsp. Acyrthosiphon pisum (strain APS) (Acyrthosiphon pisum symbiotic bacterium), this protein is NADH-quinone oxidoreductase subunit C/D.